We begin with the raw amino-acid sequence, 125 residues long: Large ribosomal subunit protein bL12 (125 aa).

The protein belongs to the bacterial ribosomal protein bL12 family. Homodimer. Part of the ribosomal stalk of the 50S ribosomal subunit. Forms a multimeric L10(L12)X complex, where L10 forms an elongated spine to which 2 to 4 L12 dimers bind in a sequential fashion. Binds GTP-bound translation factors.

Functionally, forms part of the ribosomal stalk which helps the ribosome interact with GTP-bound translation factors. Is thus essential for accurate translation. The chain is Large ribosomal subunit protein bL12 from Helicobacter pylori (strain HPAG1).